The sequence spans 741 residues: Catalase-peroxidase (741 aa).

The first 23 residues, 1-23 (MLKKIVTALGMSGMLLASSNAIA), serve as a signal peptide directing secretion. A cross-link (tryptophyl-tyrosyl-methioninium (Trp-Tyr) (with M-249)) is located at residues 102–223 (WHDAGTYRIY…YAATQMGLIY (122 aa)). Residue His-103 is the Proton acceptor of the active site. Positions 223 to 249 (YVNPEGPDGKPDIKGAASEIRQAFRAM) form a cross-link, tryptophyl-tyrosyl-methioninium (Tyr-Met) (with W-102). His-264 contributes to the heme b binding site.

The protein belongs to the peroxidase family. Peroxidase/catalase subfamily. Homodimer or homotetramer. Heme b serves as cofactor. Post-translationally, formation of the three residue Trp-Tyr-Met cross-link is important for the catalase, but not the peroxidase activity of the enzyme.

It carries out the reaction H2O2 + AH2 = A + 2 H2O. It catalyses the reaction 2 H2O2 = O2 + 2 H2O. Bifunctional enzyme with both catalase and broad-spectrum peroxidase activity. The chain is Catalase-peroxidase from Francisella tularensis subsp. tularensis (strain FSC 198).